A 137-amino-acid chain; its full sequence is ATP synthase epsilon chain (137 aa).

The protein belongs to the ATPase epsilon chain family. As to quaternary structure, F-type ATPases have 2 components, CF(1) - the catalytic core - and CF(0) - the membrane proton channel. CF(1) has five subunits: alpha(3), beta(3), gamma(1), delta(1), epsilon(1). CF(0) has three main subunits: a, b and c.

It localises to the cell inner membrane. Functionally, produces ATP from ADP in the presence of a proton gradient across the membrane. This is ATP synthase epsilon chain from Ruegeria sp. (strain TM1040) (Silicibacter sp.).